Here is a 208-residue protein sequence, read N- to C-terminus: CASP-like protein 3A1 (208 aa).

Polar residues-rich tracts occupy residues 1–11 (MGSFANGQNGS) and 17–33 (TPAT…TTSA). The interval 1-33 (MGSFANGQNGSELGIQTPATGSNAALEPPTTSA) is disordered. At 1–43 (MGSFANGQNGSELGIQTPATGSNAALEPPTTSAAAPRCPRLGM) the chain is on the cytoplasmic side. A helical membrane pass occupies residues 44–64 (AMVAARAAALVMALLSVSLMV). Topologically, residues 65-92 (SAKQRGTLAIFGIEIPLYAKWSLSDSLQ) are extracellular. Residues 93–113 (SLVGISAAAAAYSLAQLLSIA) traverse the membrane as a helical segment. Over 114-128 (HTALKKAPVVPSRRY) the chain is Cytoplasmic. A helical membrane pass occupies residues 129 to 149 (AWMLLAGDQVFAYAMLSAGSA). Over 150 to 183 (AAAVANLNRTGVRHTALPNFCKPLPRFCDLSAAS) the chain is Extracellular. An N-linked (GlcNAc...) asparagine glycan is attached at N157. Residues 184 to 204 (IACAFLGCAFLAASAVIDVIW) form a helical membrane-spanning segment. Residues 205–208 (LSRL) lie on the Cytoplasmic side of the membrane.

The protein belongs to the Casparian strip membrane proteins (CASP) family. In terms of assembly, homodimer and heterodimers.

Its subcellular location is the cell membrane. This Hordeum vulgare subsp. vulgare (Domesticated barley) protein is CASP-like protein 3A1.